We begin with the raw amino-acid sequence, 113 residues long: MNTVRVTFLLVFVLAVSLGQADKDENRMEMQEKTEQGKSYLDFAENLLLQKLEELVAKLLEEDSEESRNSRQKRCIGEGVPCDENDPRCCSGLVCLKPTLHGIWYKSYYCYKK.

Residues 1–21 form the signal peptide; that stretch reads MNTVRVTFLLVFVLAVSLGQA. The propeptide occupies 22-74; sequence DKDENRMEMQEKTEQGKSYLDFAENLLLQKLEELVAKLLEEDSEESRNSRQKR. Intrachain disulfides connect Cys-75–Cys-90, Cys-82–Cys-95, and Cys-89–Cys-110.

Belongs to the neurotoxin 14 (magi-1) family. 01 (HNTX-16) subfamily. As to expression, expressed by the venom gland.

The protein localises to the secreted. Its function is as follows. Probable ion channel inhibitor. This Cyriopagopus hainanus (Chinese bird spider) protein is U11-theraphotoxin-Hhn1a.